The sequence spans 168 residues: Cytochrome c-type biogenesis protein CcmE (168 aa).

At 1–7 (MTRKKRR) the chain is on the cytoplasmic side. Residues 8–28 (LYMLGLALLGLGTATALTLSA) traverse the membrane as a helical; Signal-anchor for type II membrane protein segment. Topologically, residues 29–168 (FEENIVFFYS…KVHATTTLKP (140 aa)) are periplasmic. Positions 122 and 126 each coordinate heme. The disordered stretch occupies residues 149–168 (SIYTPADSDDKVHATTTLKP).

This sequence belongs to the CcmE/CycJ family.

The protein resides in the cell inner membrane. Heme chaperone required for the biogenesis of c-type cytochromes. Transiently binds heme delivered by CcmC and transfers the heme to apo-cytochromes in a process facilitated by CcmF and CcmH. In Rhodospirillum centenum (strain ATCC 51521 / SW), this protein is Cytochrome c-type biogenesis protein CcmE.